The sequence spans 263 residues: Uroplakin-3b-like protein 1 (263 aa).

A signal peptide spans 1–33; sequence MDNSWRLGPAIGLSAGQSQLLVSLLLLLTRVQP. Topologically, residues 34-204 are extracellular; it reads GTDVAAPEHI…PGPQSPGTVV (171 aa). N-linked (GlcNAc...) asparagine glycans are attached at residues Asn-51, Asn-76, and Asn-91. Residues 205-225 traverse the membrane as a helical segment; it reads IIAILSILLAVLLTVLLAVLI. At 226–263 the chain is on the cytoplasmic side; the sequence is YTCFNSCRSTSLSGPEEAGSVRRYTTHLAFSTPAEGAS.

This sequence belongs to the uroplakin-3 family.

The protein resides in the membrane. This chain is Uroplakin-3b-like protein 1, found in Homo sapiens (Human).